Consider the following 63-residue polypeptide: H/ACA ribonucleoprotein complex subunit 3-like protein (63 aa).

The segment at 18 to 40 (KMDPEGKPTLSAHPARFSPDDKY) is disordered.

The protein belongs to the NOP10 family. As to quaternary structure, component of the small nucleolar ribonucleoprotein particles containing H/ACA-type snoRNAs (H/ACA snoRNPs).

It is found in the nucleus. The protein resides in the nucleolus. Functionally, required for ribosome biogenesis. Part of a complex which catalyzes pseudouridylation of rRNA. This involves the isomerization of uridine such that the ribose is subsequently attached to C5, instead of the normal N1. Pseudouridine ('psi') residues may serve to stabilize the conformation of rRNAs. The protein is H/ACA ribonucleoprotein complex subunit 3-like protein of Trypanosoma cruzi.